A 296-amino-acid chain; its full sequence is Tuberculosinyl adenosine transferase (296 aa).

It belongs to the diterpene synthase family. As to quaternary structure, homodimer. Mg(2+) is required as a cofactor.

The enzyme catalyses tuberculosinyl diphosphate + adenosine + H(+) = 1-tuberculosinyladenosine + diphosphate. It carries out the reaction tuberculosinyl diphosphate + H2O = tuberculosinol + diphosphate. The catalysed reaction is tuberculosinyl diphosphate + H2O = (13R)-edaxadiene + diphosphate. It catalyses the reaction tuberculosinyl diphosphate + H2O = (13S)-edaxadiene + diphosphate. Functionally, tuberculosinyl transferase that catalyzes the condensation of adenosine and tuberculosinyl diphosphate (TbPP) to generate 1-tuberculosinyladenosine (1-TbAd), which acts as an antiacid that directly protects M.tuberculosis from acid pH and physically remodels M.tuberculosis phagolysosomes. In addition, acts as a phosphatase that catalyzes the diphosphate-removal from TbPP to produce both tuberculosinol (TOH) and isotuberculosinol (iso-TOH). The chain is Tuberculosinyl adenosine transferase from Mycobacterium tuberculosis (strain CDC 1551 / Oshkosh).